The sequence spans 402 residues: Dynactin subunit 2 (402 aa).

Residues 1–24 form a disordered region; it reads MADPKYADLPGIARNEPDVYETSD. Position 2 is an N-acetylalanine (alanine 2). Tyrosine 6 is subject to Phosphotyrosine. At serine 83 the chain carries Phosphoserine. A Phosphotyrosine modification is found at tyrosine 86. Residues 100–130 adopt a coiled-coil conformation; sequence QQKYQRLLHEVQELTTEVEKIKTTVKESATE. 2 positions are modified to phosphothreonine: threonine 134 and threonine 199. The interval 185-205 is disordered; that stretch reads KSSKGSSGGKSTGGTPPDSSL. Residues 215-247 are a coiled coil; it reads EQDKFSQAAKVAELEKRLTELEATVRCDQDAQN. Residue serine 321 is modified to Phosphoserine.

Belongs to the dynactin subunit 2 family. Subunit of dynactin, a multiprotein complex part of a tripartite complex with dynein and a adapter, such as BICDL1, BICD2 or HOOK3. The dynactin complex is built around ACTR1A/ACTB filament and consists of an actin-related filament composed of a shoulder domain, a pointed end and a barbed end. Its length is defined by its flexible shoulder domain. The soulder is composed of 2 DCTN1 subunits, 4 DCTN2 and 2 DCTN3. The 4 DCNT2 (via N-terminus) bind the ACTR1A filament and act as molecular rulers to determine the length. The pointed end is important for binding dynein-dynactin cargo adapters and consists of 4 subunits: ACTR10, DCNT4, DCTN5 and DCTN6. The barbed end is composed of a CAPZA1:CAPZB heterodimers, which binds ACTR1A/ACTB filament and dynactin and stabilizes dynactin. Interacts with BICD2 and CEP135. Interacts with DYNAP. Interacts with ECPAS. Interacts with MAPRE1.

Its subcellular location is the cytoplasm. The protein localises to the cytoskeleton. It localises to the microtubule organizing center. It is found in the centrosome. The protein resides in the membrane. Functionally, part of the dynactin complex that activates the molecular motor dynein for ultra-processive transport along microtubules. In the dynactin soulder domain, binds the ACTR1A filament and acts as a molecular ruler to determine the length. Modulates cytoplasmic dynein binding to an organelle, and plays a role in prometaphase chromosome alignment and spindle organization during mitosis. Involved in anchoring microtubules to centrosomes. May play a role in synapse formation during brain development. The protein is Dynactin subunit 2 (Dctn2) of Rattus norvegicus (Rat).